The sequence spans 392 residues: HCLS1-binding protein 3 (392 aa).

An N-acetylmethionine modification is found at methionine 1. Residues serine 3, serine 139, and serine 194 each carry the phosphoserine modification. In terms of domain architecture, PX spans 19–142 (GLDLTVPQHQ…EFLGTRSPGA (124 aa)). 3 disordered regions span residues 138 to 162 (RSPG…QTGN), 174 to 265 (DQVA…PLKL), and 319 to 364 (GAEP…KPQE). Over residues 190 to 201 (DAEESLEEEEAL) the composition is skewed to acidic residues. Over residues 208–220 (RSKKPKKHPKVAV) the composition is skewed to basic residues. Phosphoserine is present on serine 249. Residues 325–335 (KPQLKPKPPVA) are compositionally biased toward pro residues. Lysine 337 is subject to N6-acetyllysine.

In terms of assembly, binds HCLS1. Interacts with the SH3 domain of HCLS1 in vitro.

Functionally, may be a modulator of IL-2 signaling. The polypeptide is HCLS1-binding protein 3 (HS1BP3) (Homo sapiens (Human)).